The primary structure comprises 213 residues: ATP phosphoribosyltransferase (213 aa).

It belongs to the ATP phosphoribosyltransferase family. Short subfamily. Heteromultimer composed of HisG and HisZ subunits.

The protein localises to the cytoplasm. The catalysed reaction is 1-(5-phospho-beta-D-ribosyl)-ATP + diphosphate = 5-phospho-alpha-D-ribose 1-diphosphate + ATP. Its pathway is amino-acid biosynthesis; L-histidine biosynthesis; L-histidine from 5-phospho-alpha-D-ribose 1-diphosphate: step 1/9. Catalyzes the condensation of ATP and 5-phosphoribose 1-diphosphate to form N'-(5'-phosphoribosyl)-ATP (PR-ATP). Has a crucial role in the pathway because the rate of histidine biosynthesis seems to be controlled primarily by regulation of HisG enzymatic activity. The protein is ATP phosphoribosyltransferase of Listeria monocytogenes serotype 4a (strain HCC23).